Consider the following 699-residue polypeptide: NAD(P)H-quinone oxidoreductase subunit 5, chloroplastic (699 aa).

15 helical membrane passes run 1–21 (WIIPFVPLPVPMLIGVGLLLF), 32–52 (WAFPSILLLSIVMIFSTNLSI), 81–101 (IDPLTSIMSMLITIVGITVLI), 117–137 (FAYMSFFSTSMLGLVTSSNLI), 139–159 (IYIFWELVGVCSYLLIGFWFT), 177–197 (GDFGLLLGILGFYWITGSFEF), 216–236 (LFVTLCAALLFAGAVAKSAQF), 250–270 (TPISALIHAATMVAEGIFLVA), 272–292 (LLPLFIVIPYIMNFISLIGII), 319–339 (LGYMMLALGMGSYRSALFHLI), 346–366 (ALLFLGSGSVIHSMETIVGYS), 388–408 (ISFLLGTLSLCGIPPLACFWS), 417–437 (WLYSPIFAIIAWATAGLTAFY), 539–559 (LFPLLILVLFTLFVGYLGISF), and 598–618 (IFSVSIAYFGILLASLLYKPI).

It belongs to the complex I subunit 5 family. In terms of assembly, NDH is composed of at least 16 different subunits, 5 of which are encoded in the nucleus.

The protein localises to the plastid. Its subcellular location is the chloroplast thylakoid membrane. It catalyses the reaction a plastoquinone + NADH + (n+1) H(+)(in) = a plastoquinol + NAD(+) + n H(+)(out). The enzyme catalyses a plastoquinone + NADPH + (n+1) H(+)(in) = a plastoquinol + NADP(+) + n H(+)(out). Functionally, NDH shuttles electrons from NAD(P)H:plastoquinone, via FMN and iron-sulfur (Fe-S) centers, to quinones in the photosynthetic chain and possibly in a chloroplast respiratory chain. The immediate electron acceptor for the enzyme in this species is believed to be plastoquinone. Couples the redox reaction to proton translocation, and thus conserves the redox energy in a proton gradient. In Digitalis grandiflora (Yellow foxglove), this protein is NAD(P)H-quinone oxidoreductase subunit 5, chloroplastic (ndhF).